The sequence spans 95 residues: Large ribosomal subunit protein bL25 (95 aa).

Belongs to the bacterial ribosomal protein bL25 family. In terms of assembly, part of the 50S ribosomal subunit; part of the 5S rRNA/L5/L18/L25 subcomplex. Contacts the 5S rRNA. Binds to the 5S rRNA independently of L5 and L18.

This is one of the proteins that binds to the 5S RNA in the ribosome where it forms part of the central protuberance. The polypeptide is Large ribosomal subunit protein bL25 (Shewanella sediminis (strain HAW-EB3)).